A 295-amino-acid polypeptide reads, in one-letter code: Deleted in azoospermia-like (295 aa).

Residues 1-10 (MSTANPETPN) show a composition bias toward polar residues. The tract at residues 1–25 (MSTANPETPNSTISREASTQSSSAA) is disordered. Residues 11–25 (STISREASTQSSSAA) show a composition bias toward low complexity. An RRM domain is found at 40 to 115 (NTVFVGGIDV…KKLKLGPAIR (76 aa)). Positions 80 to 132 (KGYGFVSFFNDVDVQKIVESQINFHGKKLKLGPAIRKQNLCAYHVQPRPLVFN) are homodimerization. The DAZ domain occupies 167 to 190 (AYPTYPNSPVQVITGYQLPVYNYQ). Tyrosine 276 carries the post-translational modification Phosphotyrosine.

It belongs to the RRM DAZ family. As to quaternary structure, homodimer and heterodimer. Multiple DAZL RRMs can bind to a single RNA containing multiple GUU triplets. Forms a heterodimer with DAZ. Interacts with BOLL, DAZAP1 and DAZAP2. Interacts with PUM2. As to expression, testis specific.

The protein resides in the cytoplasm. It localises to the nucleus. In terms of biological role, RNA-binding protein, which is essential for gametogenesis in both males and females. Plays a central role during spermatogenesis. Acts by binding to the 3'-UTR of mRNA, specifically recognizing GUU triplets, and thereby regulating the translation of key transcripts. The protein is Deleted in azoospermia-like (DAZL) of Homo sapiens (Human).